The chain runs to 477 residues: Ribulose bisphosphate carboxylase large chain (477 aa).

Positions 1–2 are excised as a propeptide; sequence MS. Residue P3 is modified to N-acetylproline. K14 carries the N6,N6,N6-trimethyllysine modification. Substrate contacts are provided by N123 and T173. K175 serves as the catalytic Proton acceptor. Residue K177 coordinates substrate. Mg(2+) contacts are provided by K201, D203, and E204. K201 is modified (N6-carboxylysine). The active-site Proton acceptor is the H294. 3 residues coordinate substrate: R295, H327, and S379.

Belongs to the RuBisCO large chain family. Type I subfamily. Heterohexadecamer of 8 large chains and 8 small chains; disulfide-linked. The disulfide link is formed within the large subunit homodimers. Mg(2+) serves as cofactor. Post-translationally, the disulfide bond which can form in the large chain dimeric partners within the hexadecamer appears to be associated with oxidative stress and protein turnover.

The protein localises to the plastid. Its subcellular location is the chloroplast. The catalysed reaction is 2 (2R)-3-phosphoglycerate + 2 H(+) = D-ribulose 1,5-bisphosphate + CO2 + H2O. It carries out the reaction D-ribulose 1,5-bisphosphate + O2 = 2-phosphoglycolate + (2R)-3-phosphoglycerate + 2 H(+). RuBisCO catalyzes two reactions: the carboxylation of D-ribulose 1,5-bisphosphate, the primary event in carbon dioxide fixation, as well as the oxidative fragmentation of the pentose substrate in the photorespiration process. Both reactions occur simultaneously and in competition at the same active site. In Oryza nivara (Indian wild rice), this protein is Ribulose bisphosphate carboxylase large chain.